The chain runs to 320 residues: Ferrochelatase (320 aa).

Residues histidine 194 and glutamate 275 each contribute to the Fe cation site.

Belongs to the ferrochelatase family. As to quaternary structure, monomer.

Its subcellular location is the cytoplasm. The catalysed reaction is heme b + 2 H(+) = protoporphyrin IX + Fe(2+). It functions in the pathway porphyrin-containing compound metabolism; protoheme biosynthesis; protoheme from protoporphyrin-IX: step 1/1. Catalyzes the ferrous insertion into protoporphyrin IX. This Escherichia coli (strain K12 / MC4100 / BW2952) protein is Ferrochelatase.